Consider the following 271-residue polypeptide: MSNSPIQAVIFDWAGTIVDFGSFAPTSIFVEAFKQGFDFEIDLEEAREPMGLGKWDHIQAVGRIPAVDKRWNEKFGRSMTSEDIDAIYAAFMPLQKAKVADHADPILNAIEVVNGLKDKGIKIGSCSGYPREVMDVLIPVAADYGYKPDYVVATDDLPQGGRPAPFMALKNVIELNVTDVNACIKVDDAAPGIDEGHNAGMWTVGLLLSGNEAGLTFEEYQAADEATLNAAREKARAKLLKSSPHYLIDTIADFPEVVADIERRLAAGERP.

Asp12 acts as the Nucleophile in catalysis. Mg(2+) is bound by residues Asp12 and Ala14. Lys54 serves as the catalytic Schiff-base intermediate with substrate. Asp188 contacts Mg(2+).

This sequence belongs to the HAD-like hydrolase superfamily. PhnX family. In terms of assembly, homodimer. Requires Mg(2+) as cofactor.

It catalyses the reaction phosphonoacetaldehyde + H2O = acetaldehyde + phosphate + H(+). Involved in phosphonate degradation. The polypeptide is Phosphonoacetaldehyde hydrolase (Vibrio campbellii (strain ATCC BAA-1116)).